The sequence spans 480 residues: MSPQTETKASVGFKAGVKDYKLTYYTPEYVPLDTDILAAFRVTPQPGVPSEEAGAAVAAESSTGTWTTVWTDGLTSLDRYKGRCYHIDPVPGEENQYICYVAYPLDLFEEGSVTNMFTSIVGNVFGFKALRALRLEDLRIPVAYIKTFQGPPHGIQVERDKLNKYGRPLLGCTIKPKLGLSAKNYGRAVYECLRGGLDFTKDDENVNSQPFMRWRDRFLFCAEAIYKAQAETGEIKGHYLNATAGTCEEMIKRAVFARELGVPIVMHDYLTGGFTANTSLAHYCRDNGLLLHIHRAMHAVIDRQKNHGMHFRVLAKALRLSGGDHIHAGTVVGKLEGERDITLGFVDLLRDDYTEIDADRGIYFTQSWVSTPGVLPVASGGIHVWHMPALTEIFGDDSVLQFGGGTLGHPWGNAPGAVANRVALEACVQARNEGRDLAREGATIIREAAKWSPELAAACEVWKEIKFEFPAVDVLDKAKK.

Positions 1–2 (MS) are excised as a propeptide. P3 carries the post-translational modification N-acetylproline. An N6,N6,N6-trimethyllysine modification is found at K14. Substrate is bound by residues N123 and T173. Catalysis depends on K175, which acts as the Proton acceptor. K177 provides a ligand contact to substrate. Mg(2+) is bound by residues K201, D203, and E204. K201 is subject to N6-carboxylysine. H294 (proton acceptor) is an active-site residue. Substrate-binding residues include R295, H327, and S379.

The protein belongs to the RuBisCO large chain family. Type I subfamily. In terms of assembly, heterohexadecamer of 8 large chains and 8 small chains; disulfide-linked. The disulfide link is formed within the large subunit homodimers. Mg(2+) is required as a cofactor. In terms of processing, the disulfide bond which can form in the large chain dimeric partners within the hexadecamer appears to be associated with oxidative stress and protein turnover.

The protein localises to the plastid. It is found in the chloroplast. It carries out the reaction 2 (2R)-3-phosphoglycerate + 2 H(+) = D-ribulose 1,5-bisphosphate + CO2 + H2O. It catalyses the reaction D-ribulose 1,5-bisphosphate + O2 = 2-phosphoglycolate + (2R)-3-phosphoglycerate + 2 H(+). In terms of biological role, ruBisCO catalyzes two reactions: the carboxylation of D-ribulose 1,5-bisphosphate, the primary event in carbon dioxide fixation, as well as the oxidative fragmentation of the pentose substrate in the photorespiration process. Both reactions occur simultaneously and in competition at the same active site. This chain is Ribulose bisphosphate carboxylase large chain, found in Mollugo verticillata (Green carpetweed).